The sequence spans 357 residues: Dual-specificity RNA methyltransferase RlmN (357 aa).

Glu-89 acts as the Proton acceptor in catalysis. One can recognise a Radical SAM core domain in the interval 109–340 (EGEKYTVCVS…CTIRESKALD (232 aa)). A disulfide bond links Cys-116 and Cys-345. Residues Cys-123, Cys-127, and Cys-130 each contribute to the [4Fe-4S] cluster site. Residues 173–174 (GE), Ser-203, 226–228 (SLH), and Asn-302 contribute to the S-adenosyl-L-methionine site. The S-methylcysteine intermediate role is filled by Cys-345.

It belongs to the radical SAM superfamily. RlmN family. Requires [4Fe-4S] cluster as cofactor.

It localises to the cytoplasm. It carries out the reaction adenosine(2503) in 23S rRNA + 2 reduced [2Fe-2S]-[ferredoxin] + 2 S-adenosyl-L-methionine = 2-methyladenosine(2503) in 23S rRNA + 5'-deoxyadenosine + L-methionine + 2 oxidized [2Fe-2S]-[ferredoxin] + S-adenosyl-L-homocysteine. The enzyme catalyses adenosine(37) in tRNA + 2 reduced [2Fe-2S]-[ferredoxin] + 2 S-adenosyl-L-methionine = 2-methyladenosine(37) in tRNA + 5'-deoxyadenosine + L-methionine + 2 oxidized [2Fe-2S]-[ferredoxin] + S-adenosyl-L-homocysteine. Its function is as follows. Specifically methylates position 2 of adenine 2503 in 23S rRNA and position 2 of adenine 37 in tRNAs. m2A2503 modification seems to play a crucial role in the proofreading step occurring at the peptidyl transferase center and thus would serve to optimize ribosomal fidelity. The sequence is that of Dual-specificity RNA methyltransferase RlmN from Helicobacter pylori (strain G27).